A 299-amino-acid chain; its full sequence is tRNA pseudouridine synthase B (299 aa).

Asp49 acts as the Nucleophile in catalysis. Residues 241–299 form the PUA domain; sequence MPRVTVSGRAAARVLHGVAPAVRVEHPDGTTVAVVAANGALLALAEADGGGLRLRKVFG.

The protein belongs to the pseudouridine synthase TruB family. Type 1 subfamily.

It carries out the reaction uridine(55) in tRNA = pseudouridine(55) in tRNA. Functionally, responsible for synthesis of pseudouridine from uracil-55 in the psi GC loop of transfer RNAs. The protein is tRNA pseudouridine synthase B of Symbiobacterium thermophilum (strain DSM 24528 / JCM 14929 / IAM 14863 / T).